Reading from the N-terminus, the 445-residue chain is Sodium/proton-dependent alanine carrier protein (445 aa).

The next 9 helical transmembrane spans lie at 41–61 (IAYG…IGAA), 103–123 (AAII…SIAD), 129–149 (FGIP…FTIF), 159–179 (AEIV…AIIA), 188–208 (VFGL…GILG), 249–269 (AFSI…MILF), 304–324 (TLFP…FAFT), 349–369 (AFFA…VKTA), and 375–395 (MGDI…LLLF).

The protein belongs to the alanine or glycine:cation symporter (AGCS) (TC 2.A.25) family. Post-translationally, the N-terminus is blocked.

It is found in the cell membrane. Its function is as follows. Mediates the active transport of alanine, driven by either an H(+) or Na(+) gradient. This Bacillus sp. (strain PS3) protein is Sodium/proton-dependent alanine carrier protein.